A 243-amino-acid chain; its full sequence is Retrotransposon Gag-like protein 6 (243 aa).

Over residues 1-12 the composition is skewed to polar residues; it reads MVQPRTSKTESP. A disordered region spans residues 1-22; that stretch reads MVQPRTSKTESPASAPGASAQM. The stretch at 29 to 69 forms a coiled coil; the sequence is LTSLRLTNSALRREASTLRAEKANLTNMLESVMAELTLLRT. Disordered regions lie at residues 84–105 and 218–243; these read SAIT…PEPF and TGSC…GRNL. Polar residues predominate over residues 85-94; that stretch reads AITSNGTRPM.

It belongs to the LDOC1 family. In terms of tissue distribution, widely expressed.

This is Retrotransposon Gag-like protein 6 from Mus musculus (Mouse).